The chain runs to 302 residues: m7GpppN-mRNA hydrolase NUDT17 (302 aa).

Residues 89 to 237 (GRGVDLGVAV…DGTETPKHLP (149 aa)) form the Nudix hydrolase domain. Residues 128-149 (GHVEPDEELLDGGLRELWEESG) carry the Nudix box motif. Residues Glu143 and Glu147 each contribute to the Mg(2+) site.

Belongs to the Nudix hydrolase family. It depends on Mg(2+) as a cofactor. The cofactor is Mn(2+).

It catalyses the reaction a 5'-end (N(7)-methyl 5'-triphosphoguanosine)-ribonucleoside in mRNA + H2O = N(7)-methyl-GDP + a 5'-end phospho-ribonucleoside in mRNA + 2 H(+). Acts as a decapping enzyme capable of hydrolyzing monomethylated capped RNAs (in vitro). Hydrolyzes monomethylated capped RNA after alpha and beta phosphates to form N(7)-methyl-GDP. Shows low activity towards unmethylated capped RNA. The protein is m7GpppN-mRNA hydrolase NUDT17 (NUDT17) of Bos taurus (Bovine).